We begin with the raw amino-acid sequence, 266 residues long: Putative zinc finger protein 034R (266 aa).

The tract at residues 84–176 is disordered; the sequence is SPTKSVDKAA…GPKRDSTQQP (93 aa). Residues 88-100 are compositionally biased toward basic and acidic residues; that stretch reads SVDKAAQKEKKMP. Composition is skewed to polar residues over residues 105–119 and 160–176; these read KPTT…QGIL and GVSQ…TQQP. Residues 180–192 form a C3H1-type zinc finger; that stretch reads CKSVLKQAKCYFG.

Belongs to the IIV-6 077L family.

This chain is Putative zinc finger protein 034R, found in Aedes vexans (Inland floodwater mosquito).